Reading from the N-terminus, the 445-residue chain is Exodeoxyribonuclease 7 large subunit (445 aa).

The protein belongs to the XseA family. Heterooligomer composed of large and small subunits.

The protein localises to the cytoplasm. It catalyses the reaction Exonucleolytic cleavage in either 5'- to 3'- or 3'- to 5'-direction to yield nucleoside 5'-phosphates.. Bidirectionally degrades single-stranded DNA into large acid-insoluble oligonucleotides, which are then degraded further into small acid-soluble oligonucleotides. The protein is Exodeoxyribonuclease 7 large subunit of Nautilia profundicola (strain ATCC BAA-1463 / DSM 18972 / AmH).